We begin with the raw amino-acid sequence, 180 residues long: Protein PHLOEM PROTEIN 2-LIKE A9 (180 aa).

The disordered stretch occupies residues 1–21; sequence MSSQKSSHHKADSKMEQDNNR. The segment covering 9-21 has biased composition (basic and acidic residues); the sequence is HKADSKMEQDNNR.

The sequence is that of Protein PHLOEM PROTEIN 2-LIKE A9 (PP2A9) from Arabidopsis thaliana (Mouse-ear cress).